The sequence spans 100 residues: Putative pterin-4-alpha-carbinolamine dehydratase (100 aa).

It belongs to the pterin-4-alpha-carbinolamine dehydratase family.

The catalysed reaction is (4aS,6R)-4a-hydroxy-L-erythro-5,6,7,8-tetrahydrobiopterin = (6R)-L-erythro-6,7-dihydrobiopterin + H2O. The chain is Putative pterin-4-alpha-carbinolamine dehydratase from Afipia carboxidovorans (strain ATCC 49405 / DSM 1227 / KCTC 32145 / OM5) (Oligotropha carboxidovorans).